Consider the following 263-residue polypeptide: Undecaprenyl-diphosphatase (263 aa).

The next 8 helical transmembrane spans lie at M1–I21, F41–Y61, W69–V89, L96–W116, A147–L167, F177–I197, L208–I228, and G238–H258.

This sequence belongs to the UppP family.

The protein resides in the cell inner membrane. The catalysed reaction is di-trans,octa-cis-undecaprenyl diphosphate + H2O = di-trans,octa-cis-undecaprenyl phosphate + phosphate + H(+). Functionally, catalyzes the dephosphorylation of undecaprenyl diphosphate (UPP). Confers resistance to bacitracin. In Bdellovibrio bacteriovorus (strain ATCC 15356 / DSM 50701 / NCIMB 9529 / HD100), this protein is Undecaprenyl-diphosphatase.